The primary structure comprises 105 residues: Nitrogen fixation nifHD region glnB-like protein 1 (105 aa).

It belongs to the P(II) protein family.

Could be involved in the regulation of nitrogen fixation. This chain is Nitrogen fixation nifHD region glnB-like protein 1 (glnBI), found in Methanococcus maripaludis (strain DSM 14266 / JCM 13030 / NBRC 101832 / S2 / LL).